Reading from the N-terminus, the 315-residue chain is Deoxyribonuclease-1-like 1 (315 aa).

A signal peptide spans 1-29 (MDSSGGFQKHTCGHALLLLLLLLAGGAEA). Residues Glu-108 and His-159 contribute to the active site. The cysteines at positions 198 and 235 are disulfide-linked. Asn-272 carries an N-linked (GlcNAc...) asparagine glycan.

The protein belongs to the DNase I family.

The protein localises to the endoplasmic reticulum. In Sus scrofa (Pig), this protein is Deoxyribonuclease-1-like 1 (DNASE1L1).